The following is a 928-amino-acid chain: Probable outer membrane protein pmp10 (928 aa).

Positions 1-25 (MKSQFSWLVLSSTLACFTSCSTVFA) are cleaved as a signal peptide. The region spanning 635 to 928 (TLCSDRGFWA…NVDLGGKFQF (294 aa)) is the Autotransporter domain.

The protein belongs to the PMP outer membrane protein family.

It localises to the secreted. The protein localises to the cell wall. It is found in the cell outer membrane. In Chlamydia pneumoniae (Chlamydophila pneumoniae), this protein is Probable outer membrane protein pmp10 (pmp10).